Reading from the N-terminus, the 237-residue chain is Protein GrpE (237 aa).

Disordered stretches follow at residues 27–51 (EDRE…LSET) and 202–237 (AVSS…PQHS). Composition is skewed to low complexity over residues 33 to 45 (ASTS…AEAS) and 204 to 213 (SSGSPTSEPS). Residues 227 to 237 (TPASPQNPQHS) show a composition bias toward polar residues.

It belongs to the GrpE family. Homodimer.

Its subcellular location is the cytoplasm. Participates actively in the response to hyperosmotic and heat shock by preventing the aggregation of stress-denatured proteins, in association with DnaK and GrpE. It is the nucleotide exchange factor for DnaK and may function as a thermosensor. Unfolded proteins bind initially to DnaJ; upon interaction with the DnaJ-bound protein, DnaK hydrolyzes its bound ATP, resulting in the formation of a stable complex. GrpE releases ADP from DnaK; ATP binding to DnaK triggers the release of the substrate protein, thus completing the reaction cycle. Several rounds of ATP-dependent interactions between DnaJ, DnaK and GrpE are required for fully efficient folding. The protein is Protein GrpE of Synechococcus sp. (strain JA-3-3Ab) (Cyanobacteria bacterium Yellowstone A-Prime).